A 304-amino-acid chain; its full sequence is Putative dihydroorotate dehydrogenase A (fumarate) (304 aa).

Residues Ser21 and 45–46 each bind FMN; that span reads KS. Substrate contacts are provided by residues Lys45, 69-73, and Asn129; that span reads NAVGL. Residue Asn129 participates in FMN binding. Cys132 functions as the Nucleophile in the catalytic mechanism. The FMN site is built by Lys168 and Ile194. 195–196 contributes to the substrate binding site; sequence NT. FMN is bound by residues Gly220, 246–247, and 268–269; these read GG and GS.

It belongs to the dihydroorotate dehydrogenase family. Type 1 subfamily. As to quaternary structure, homodimer. FMN is required as a cofactor.

Its subcellular location is the cytoplasm. The catalysed reaction is (S)-dihydroorotate + fumarate = orotate + succinate. It functions in the pathway pyrimidine metabolism; UMP biosynthesis via de novo pathway. Its function is as follows. Catalyzes the conversion of dihydroorotate to orotate with fumarate as the electron acceptor. The chain is Putative dihydroorotate dehydrogenase A (fumarate) (pyrD) from Pediococcus pentosaceus (strain ATCC 25745 / CCUG 21536 / LMG 10740 / 183-1w).